A 310-amino-acid chain; its full sequence is Leucine carboxyl methyltransferase 1 (310 aa).

Residues Arg-50, Gly-75, Asp-100, 145 to 146 (DI), and Glu-169 contribute to the S-adenosyl-L-methionine site.

It belongs to the methyltransferase superfamily. LCMT family.

The catalysed reaction is [phosphatase 2A protein]-C-terminal L-leucine + S-adenosyl-L-methionine = [phosphatase 2A protein]-C-terminal L-leucine methyl ester + S-adenosyl-L-homocysteine. Functionally, methylates the carboxyl group of the C-terminal leucine residue of protein phosphatase 2A catalytic subunits to form alpha-leucine ester residues. The chain is Leucine carboxyl methyltransferase 1 (ppm1) from Schizosaccharomyces pombe (strain 972 / ATCC 24843) (Fission yeast).